The sequence spans 345 residues: Anthranilate phosphoribosyltransferase (345 aa).

5-phospho-alpha-D-ribose 1-diphosphate contacts are provided by residues glycine 79, 82–83, threonine 87, 89–92, 106–114, and serine 118; these read GD, NVST, and KHGNRAVSG. Residue glycine 79 participates in anthranilate binding. Serine 91 contacts Mg(2+). An anthranilate-binding site is contributed by asparagine 109. Residue arginine 164 participates in anthranilate binding. Positions 223 and 224 each coordinate Mg(2+).

The protein belongs to the anthranilate phosphoribosyltransferase family. As to quaternary structure, homodimer. Mg(2+) is required as a cofactor.

The enzyme catalyses N-(5-phospho-beta-D-ribosyl)anthranilate + diphosphate = 5-phospho-alpha-D-ribose 1-diphosphate + anthranilate. It functions in the pathway amino-acid biosynthesis; L-tryptophan biosynthesis; L-tryptophan from chorismate: step 2/5. Functionally, catalyzes the transfer of the phosphoribosyl group of 5-phosphorylribose-1-pyrophosphate (PRPP) to anthranilate to yield N-(5'-phosphoribosyl)-anthranilate (PRA). The sequence is that of Anthranilate phosphoribosyltransferase from Saccharolobus islandicus (strain M.16.27) (Sulfolobus islandicus).